The chain runs to 139 residues: D-ribose pyranase (139 aa).

The active-site Proton donor is the His-20. Residues Asp-28, His-106, and 128-130 (YAN) each bind substrate.

Belongs to the RbsD / FucU family. RbsD subfamily. Homodecamer.

The protein resides in the cytoplasm. The enzyme catalyses beta-D-ribopyranose = beta-D-ribofuranose. It participates in carbohydrate metabolism; D-ribose degradation; D-ribose 5-phosphate from beta-D-ribopyranose: step 1/2. Its function is as follows. Catalyzes the interconversion of beta-pyran and beta-furan forms of D-ribose. The protein is D-ribose pyranase of Aeromonas hydrophila subsp. hydrophila (strain ATCC 7966 / DSM 30187 / BCRC 13018 / CCUG 14551 / JCM 1027 / KCTC 2358 / NCIMB 9240 / NCTC 8049).